A 298-amino-acid polypeptide reads, in one-letter code: Junctional adhesion molecule B (298 aa).

The first 28 residues, 1–28 (MARRSRHRLLLLLLRYLVVALGYHKAYG), serve as a signal peptide directing secretion. Residues 29 to 238 (FSAPKDQQVV…RMQVDDLNIS (210 aa)) lie on the Extracellular side of the membrane. The region spanning 32 to 127 (PKDQQVVTAV…GQNLEEDTVT (96 aa)) is the Ig-like V-type domain. Cystine bridges form between cysteine 50-cysteine 109 and cysteine 155-cysteine 214. Residues asparagine 98, asparagine 187, and asparagine 236 are each glycosylated (N-linked (GlcNAc...) asparagine). The Ig-like C2-type domain occupies 134 to 238 (PAVPSCEVPS…RMQVDDLNIS (105 aa)). A helical membrane pass occupies residues 239 to 259 (GIIAAVVVVALVISVCGLGVC). Topologically, residues 260 to 298 (YAQRKGYFSKETSFQKSNSSSKATTMSENDFKHTKSFII) are cytoplasmic.

Belongs to the immunoglobulin superfamily. In terms of tissue distribution, highly expressed in heart, placenta, lung, foreskin and lymph node. Prominently expressed on high endothelial venules and also present on the endothelia of other vessels (at protein level). Also expressed in the brain in the caudate nuclei.

The protein localises to the cell membrane. Its subcellular location is the cell junction. The protein resides in the tight junction. Functionally, junctional adhesion protein that mediates heterotypic cell-cell interactions with its cognate receptor JAM3 to regulate different cellular processes. Plays a role in homing and mobilization of hematopoietic stem and progenitor cells within the bone marrow. At the surface of bone marrow stromal cells, it contributes to the retention of the hematopoietic stem and progenitor cells expressing JAM3. Plays a central role in leukocytes extravasation by facilitating not only transmigration but also tethering and rolling of leukocytes along the endothelium. Tethering and rolling of leukocytes are dependent on the binding by JAM2 of the integrin alpha-4/beta-1. Plays a role in spermatogenesis where JAM2 and JAM3, which are respectively expressed by Sertoli and germ cells, mediate an interaction between both cell types and play an essential role in the anchorage of germ cells onto Sertoli cells and the assembly of cell polarity complexes during spermatid differentiation. Also functions as an inhibitory somatodendritic cue that prevents the myelination of non-axonal parts of neurons. During myogenesis, it is involved in myocyte fusion. May also play a role in angiogenesis. This Homo sapiens (Human) protein is Junctional adhesion molecule B.